The primary structure comprises 189 residues: MIKETMRNNKLFGLWIYLMSDCIIFAVLFAVYAIISSNFSTNLINHKIFNLSYVFLETLILLLSSLSSGMLTIQKNKNNIKIIYFYLLLTFFLGLSFLLMEVNEFYKLILENCSPSQHAFFSIFFTIVGVHGIHVFFGLIFILSILYQLFYLGITNTIRIRILCFSLFWHFLDIIWICVFTFVYLNGVI.

Residues Met1–Lys10 are Cytoplasmic-facing. Residues Leu11 to Val31 form a helical membrane-spanning segment. Residues Tyr32–Ser52 lie on the Extracellular side of the membrane. Residues Tyr53–Ile73 form a helical membrane-spanning segment. Over Gln74 to Lys81 the chain is Cytoplasmic. The chain crosses the membrane as a helical span at residues Ile82 to Val102. Topologically, residues Asn103–Ser122 are extracellular. Residues Ile123 to Leu143 form a helical membrane-spanning segment. At Ser144–Arg161 the chain is on the cytoplasmic side. A helical membrane pass occupies residues Ile162–Phe182. The Extracellular segment spans residues Val183–Ile189.

The protein belongs to the cytochrome c oxidase subunit 3 family. Heterooctamer of two A chains, two B chains, two C chains and two D chains.

The protein resides in the cell membrane. Functionally, cytochrome bo(3) ubiquinol terminal oxidase is the component of the aerobic respiratory chain of E.coli that predominates when cells are grown at high aeration. Has proton pump activity across the membrane in addition to electron transfer, pumping 2 protons/electron. The sequence is that of Cytochrome bo(3) ubiquinol oxidase subunit 3 (cyoC) from Buchnera aphidicola subsp. Schizaphis graminum (strain Sg).